The sequence spans 338 residues: Ketol-acid reductoisomerase (NADP(+)) (338 aa).

In terms of domain architecture, KARI N-terminal Rossmann spans 1–181; that stretch reads MKVFYDKDCD…GGGKAGIIET (181 aa). Residues 24-27, Arg-47, and Ser-52 contribute to the NADP(+) site; that span reads YGSQ. His-107 is an active-site residue. Gly-133 contacts NADP(+). Residues 182-327 enclose the KARI C-terminal knotted domain; the sequence is TFREETETDL…EKLRAMMPWI (146 aa). Asp-190, Glu-194, Glu-226, and Glu-230 together coordinate Mg(2+). Ser-251 provides a ligand contact to substrate.

This sequence belongs to the ketol-acid reductoisomerase family. Mg(2+) is required as a cofactor.

It catalyses the reaction (2R)-2,3-dihydroxy-3-methylbutanoate + NADP(+) = (2S)-2-acetolactate + NADPH + H(+). It carries out the reaction (2R,3R)-2,3-dihydroxy-3-methylpentanoate + NADP(+) = (S)-2-ethyl-2-hydroxy-3-oxobutanoate + NADPH + H(+). Its pathway is amino-acid biosynthesis; L-isoleucine biosynthesis; L-isoleucine from 2-oxobutanoate: step 2/4. It functions in the pathway amino-acid biosynthesis; L-valine biosynthesis; L-valine from pyruvate: step 2/4. In terms of biological role, involved in the biosynthesis of branched-chain amino acids (BCAA). Catalyzes an alkyl-migration followed by a ketol-acid reduction of (S)-2-acetolactate (S2AL) to yield (R)-2,3-dihydroxy-isovalerate. In the isomerase reaction, S2AL is rearranged via a Mg-dependent methyl migration to produce 3-hydroxy-3-methyl-2-ketobutyrate (HMKB). In the reductase reaction, this 2-ketoacid undergoes a metal-dependent reduction by NADPH to yield (R)-2,3-dihydroxy-isovalerate. This is Ketol-acid reductoisomerase (NADP(+)) from Albidiferax ferrireducens (strain ATCC BAA-621 / DSM 15236 / T118) (Rhodoferax ferrireducens).